A 487-amino-acid polypeptide reads, in one-letter code: ATP-dependent rRNA helicase RRP3 (487 aa).

Residues 22 to 67 (IKRKALEKQQQAHANEPSPSDEDSAQSNSKDSNSNEQPEESEEIFE) are disordered. The Q motif motif lies at 67–95 (ESFTELDLVPELIEACKNLNYNKPTPIQS). The Helicase ATP-binding domain occupies 98–270 (IPPALKGSDI…RASLTNPVKC (173 aa)). 111–118 (AQTGSGKT) lines the ATP pocket. Residues 217 to 220 (DEAD) carry the DEAD box motif. The 145-residue stretch at 298–442 (LIYLLNEFIG…ENVDKDAILA (145 aa)) folds into the Helicase C-terminal domain. The tract at residues 459 to 487 (NRRNKEKQARGKGRRGRMATRDNMDREER) is disordered. Residues 477–487 (ATRDNMDREER) show a composition bias toward basic and acidic residues.

Belongs to the DEAD box helicase family. DDX47/RRP3 subfamily. As to quaternary structure, interacts with the SSU processome.

It is found in the nucleus. It carries out the reaction ATP + H2O = ADP + phosphate + H(+). ATP-dependent rRNA helicase required for pre-ribosomal RNA processing. Involved in the maturation of the 35S-pre-rRNA and to its cleavage to mature 18S rRNA. This Kluyveromyces lactis (strain ATCC 8585 / CBS 2359 / DSM 70799 / NBRC 1267 / NRRL Y-1140 / WM37) (Yeast) protein is ATP-dependent rRNA helicase RRP3.